We begin with the raw amino-acid sequence, 323 residues long: ATP synthase gamma chain (323 aa).

It belongs to the ATPase gamma chain family. As to quaternary structure, F-type ATPases have 2 components, CF(1) - the catalytic core - and CF(0) - the membrane proton channel. CF(1) has five subunits: alpha(3), beta(3), gamma(1), delta(1), epsilon(1). CF(0) has three main subunits: a, b and c.

Its subcellular location is the cell membrane. Its function is as follows. Produces ATP from ADP in the presence of a proton gradient across the membrane. The gamma chain is believed to be important in regulating ATPase activity and the flow of protons through the CF(0) complex. This is ATP synthase gamma chain from Nocardia farcinica (strain IFM 10152).